The primary structure comprises 234 residues: HTH-type transcriptional repressor FabR (234 aa).

In terms of domain architecture, HTH tetR-type spans 29–89 (KTRRSLVEAA…TMVDESGLML (61 aa)). Residues 52 to 71 (SLREVAREAGIAPTSFYRHF) constitute a DNA-binding region (H-T-H motif).

In terms of assembly, homodimer.

It is found in the cytoplasm. With respect to regulation, has been suggested to require either an unsaturated acyl carrier protein or unsaturated acyl-CoA (but not their saturated equivalents) for DNA-binding. Another group suggests that unsaturated thioesters are not essential but act instead to enhance DNA-binding. Its function is as follows. Binds the promoter region of at least fabA and fabB, but probably not yqfA. Represses the transcription of fabA and fabB, involved in unsaturated fatty acid (UFA) biosynthesis. By controlling UFA production, FabR directly influences the physical properties of the membrane bilayer. The polypeptide is HTH-type transcriptional repressor FabR (Escherichia coli (strain K12)).